We begin with the raw amino-acid sequence, 422 residues long: Synaptotagmin-1 (422 aa).

Over 1 to 57 (MVSESHHEALAAPPVTTVATVLPHNATEPASPGEGKEDAFSKLKEKFMNELHKIPLP) the chain is Vesicular. N-linked (GlcNAc...) asparagine glycosylation occurs at Asn-25. The helical transmembrane segment at 58–80 (PWALIAIAIVAVLLVLTCCFCIC) threads the bilayer. 5 S-palmitoyl cysteine lipidation sites follow: Cys-75, Cys-76, Cys-78, Cys-80, and Cys-83. Topologically, residues 81 to 422 (KKCLFKKKNK…EVDAMLAVKK (342 aa)) are cytoplasmic. A disordered region spans residues 113–142 (TMKDQALKDDDAETGLTDGEEKEEPKEEEK). The segment covering 122–134 (DDAETGLTDGEEK) has biased composition (acidic residues). Thr-129 is modified (phosphothreonine). The tract at residues 136–382 (EPKEEEKLGK…AIGKVFVGYN (247 aa)) is phospholipid binding. Residues 142–261 (KLGKLQYSLD…DFGHVTEEWR (120 aa)) form the C2 1 domain. 3 residues coordinate Ca(2+): Leu-172, Asp-173, and Asp-179. Tyr-230 is modified (phosphotyrosine). Asp-231, Phe-232, Asp-233, Ser-236, Lys-237, and Asp-239 together coordinate Ca(2+). Residue Ser-265 is modified to Phosphoserine. In terms of domain architecture, C2 2 spans 273-406 (KLGDICFSLR…NPRRPIAQWH (134 aa)). 2 residues coordinate Ca(2+): Asp-304 and Asp-310. Phosphoserine is present on residues Ser-343 and Ser-345. Asp-364, Asp-366, and Asp-372 together coordinate Ca(2+).

The protein belongs to the synaptotagmin family. In terms of assembly, homotetramer. Heterodimer; heterodimerizes with SYT2 in presence of calcium. Interacts with SCAMP5. Interacts with STON2. Forms a complex with SV2B, syntaxin 1 and SNAP25. Interacts with SV2A, SV2B and SV2C. Interacts with RIMS1. Interacts with PRRT2. Interacts with DNAJC5 in a phosphorylation-dependent manner. Interacts (via N-terminus) with RAB3A. Interacts with SYT12. Interacts with calmodulin. Interacts with DNM1 (via C-terminal proline-rich domain (PRD)); this interaction facilitates vesicle fission during clathrin-mediated endocytosis (CME). Ca(2+) serves as cofactor. Post-translationally, glycosylated.

The protein localises to the cytoplasmic vesicle. The protein resides in the secretory vesicle membrane. Its subcellular location is the secretory vesicle. It is found in the synaptic vesicle membrane. It localises to the chromaffin granule membrane. The protein localises to the cytoplasm. In terms of biological role, calcium sensor that participates in triggering neurotransmitter release at the synapse. May have a regulatory role in the membrane interactions during trafficking of synaptic vesicles at the active zone of the synapse. It binds acidic phospholipids with a specificity that requires the presence of both an acidic head group and a diacyl backbone. A Ca(2+)-dependent interaction between synaptotagmin and putative receptors for activated protein kinase C has also been reported. It can bind to at least three additional proteins in a Ca(2+)-independent manner; these are neurexins, syntaxin and AP2. Plays a role in dendrite formation by melanocytes. The protein is Synaptotagmin-1 of Bos taurus (Bovine).